Reading from the N-terminus, the 173-residue chain is ADP-ribosylation factor-like protein 11 (173 aa).

A lipid anchor (N-myristoyl glycine) is attached at Gly2. Residues Gly17–Thr24, Asp61–Gln65, and Asn120–Glu123 each bind GTP.

The protein belongs to the small GTPase superfamily. Arf family.

May play a role in apoptosis. May act as a tumor suppressor. The protein is ADP-ribosylation factor-like protein 11 (Arl11) of Rattus norvegicus (Rat).